The primary structure comprises 333 residues: 4-hydroxyproline epimerase (333 aa).

Catalysis depends on Cys-90, which acts as the Proton acceptor. Residues 91–92 (GH) and Asp-249 contribute to the substrate site. Cys-253 (proton donor) is an active-site residue. 254 to 255 (GT) lines the substrate pocket.

Belongs to the proline racemase family. As to quaternary structure, homodimer.

The catalysed reaction is trans-4-hydroxy-L-proline = cis-4-hydroxy-D-proline. Allows intracellular utilization of 4-hydroxyproline, one of the major constituents of host collagen, by converting 4-hydroxy-L-proline to 4-hydroxy-D-proline, which can be further metabolized by intracellular 4-hydroxy-D-proline oxidases. Strong B-cell mitogen. Plays an important role in the regulation of intra- and extracellular amino acid pools, allowing the bacterium to profit from host precursors and enzymatic pathways. The chain is 4-hydroxyproline epimerase from Brucella suis (strain ATCC 23445 / NCTC 10510).